The sequence spans 261 residues: Cytochrome c oxidase subunit 3 (261 aa).

The Mitochondrial matrix segment spans residues 1-15 (MTHQTHAYHMVNPSP). A helical membrane pass occupies residues 16–34 (WPLTGALSALLMTSGLVMW). Residues 35-40 (FHYHST) lie on the Mitochondrial intermembrane side of the membrane. Residues 41–66 (ILVLLGLLTNILTMYQWWRDVVREGT) form a helical membrane-spanning segment. The Mitochondrial matrix segment spans residues 67-72 (FQGHHT). Residues 73-105 (PTVQKGLRYGMVLFIISEVFFFAGFFWAFYHSS) form a helical membrane-spanning segment. The Mitochondrial intermembrane segment spans residues 106-128 (LAPTPELGGCWPPTGIHPLDPME). Residues 129–152 (VPLLNTSVLLASGVTITWAHHSLM) traverse the membrane as a helical segment. Residues 153–155 (EGN) lie on the Mitochondrial matrix side of the membrane. Residues 156 to 183 (RKQMLQALFITISLGIYFTLLQASEYHE) form a helical membrane-spanning segment. Residues 184–190 (ASFSISD) are Mitochondrial intermembrane-facing. The chain crosses the membrane as a helical span at residues 191–223 (GIYGSTFFMATGFHGLHVIIGSTFLAVCFLRQL). Over 224-232 (KFHFTSNHH) the chain is Mitochondrial matrix. A helical transmembrane segment spans residues 233–256 (FGFEAAAWYWHFVDVVWLFLYVSI). Residues 257–261 (YWWGS) are Mitochondrial intermembrane-facing.

This sequence belongs to the cytochrome c oxidase subunit 3 family. In terms of assembly, component of the cytochrome c oxidase (complex IV, CIV), a multisubunit enzyme composed of 14 subunits. The complex is composed of a catalytic core of 3 subunits MT-CO1, MT-CO2 and MT-CO3, encoded in the mitochondrial DNA, and 11 supernumerary subunits COX4I, COX5A, COX5B, COX6A, COX6B, COX6C, COX7A, COX7B, COX7C, COX8 and NDUFA4, which are encoded in the nuclear genome. The complex exists as a monomer or a dimer and forms supercomplexes (SCs) in the inner mitochondrial membrane with NADH-ubiquinone oxidoreductase (complex I, CI) and ubiquinol-cytochrome c oxidoreductase (cytochrome b-c1 complex, complex III, CIII), resulting in different assemblies (supercomplex SCI(1)III(2)IV(1) and megacomplex MCI(2)III(2)IV(2)).

Its subcellular location is the mitochondrion inner membrane. It catalyses the reaction 4 Fe(II)-[cytochrome c] + O2 + 8 H(+)(in) = 4 Fe(III)-[cytochrome c] + 2 H2O + 4 H(+)(out). Component of the cytochrome c oxidase, the last enzyme in the mitochondrial electron transport chain which drives oxidative phosphorylation. The respiratory chain contains 3 multisubunit complexes succinate dehydrogenase (complex II, CII), ubiquinol-cytochrome c oxidoreductase (cytochrome b-c1 complex, complex III, CIII) and cytochrome c oxidase (complex IV, CIV), that cooperate to transfer electrons derived from NADH and succinate to molecular oxygen, creating an electrochemical gradient over the inner membrane that drives transmembrane transport and the ATP synthase. Cytochrome c oxidase is the component of the respiratory chain that catalyzes the reduction of oxygen to water. Electrons originating from reduced cytochrome c in the intermembrane space (IMS) are transferred via the dinuclear copper A center (CU(A)) of subunit 2 and heme A of subunit 1 to the active site in subunit 1, a binuclear center (BNC) formed by heme A3 and copper B (CU(B)). The BNC reduces molecular oxygen to 2 water molecules using 4 electrons from cytochrome c in the IMS and 4 protons from the mitochondrial matrix. In Dugong dugon (Dugong), this protein is Cytochrome c oxidase subunit 3 (MT-CO3).